The chain runs to 309 residues: MIRSALSNWREYLTPVSHKSTFLTTGQITPEEFVQAGDYLCHMFPTWKWNDMADDNKYRDFLPKDKQFLVIRKVPCSERAQAVVTMDEIENGTSTDAFSAADDEDNDDDSIEIIPVSKSSSGADNDVNDIDELMEEMELEEDDDIVANKTNEMLRYYDLFITYSTSYRVPKMYIVGFNGNGTPLTPKEMFEDITPDYRKKTATIEKLPFYKRNVPSVSIHPCKHANVMKVLLDKISVVKERQREEEMQKNAEVGAPKSAGSDDGDNENWEDLQQDIDDSLRVDLYLVVFLKFITSVTPTIQHDYTMEGW.

Residues 83–151 (VVTMDEIENG…DDDIVANKTN (69 aa)) form a flexible region region. C222 acts as the Glycyl thioester intermediate in catalysis. Residues 226-284 (NVMKVLLDKISVVKERQREEEMQKNAEVGAPKSAGSDDGDNENWEDLQQDIDDSLRVDL) are handle region. Residues 243–270 (REEEMQKNAEVGAPKSAGSDDGDNENWE) are disordered.

This sequence belongs to the ATG3 family. Monomer. Interacts with ATG8 through an intermediate thioester bond through the C-terminal Gly of ATG8. Also interacts with the 40 amino acid C-terminal region of the E1-like ATG7 enzyme. Also interacts with the ATG12-ATG5 conjugate.

It is found in the cytoplasm. Its function is as follows. E2 conjugating enzyme required for the cytoplasm to vacuole transport (Cvt) and autophagy. Required for selective autophagic degradation of the nucleus (nucleophagy) as well as for mitophagy which contributes to regulate mitochondrial quantity and quality by eliminating the mitochondria to a basal level to fulfill cellular energy requirements and preventing excess ROS production. Responsible for the E2-like covalent binding of phosphatidylethanolamine to the C-terminal Gly of ATG8. The ATG12-ATG5 conjugate plays a role of an E3 and promotes the transfer of ATG8 from ATG3 to phosphatidylethanolamine (PE). This step is required for the membrane association of ATG8. The formation of the ATG8-phosphatidylethanolamine conjugate is essential for autophagy and for the cytoplasm to vacuole transport (Cvt). The ATG8-PE conjugate mediates tethering between adjacent membranes and stimulates membrane hemifusion, leading to expansion of the autophagosomal membrane during autophagy. This chain is Autophagy-related protein 3 (ATG3), found in Candida glabrata (strain ATCC 2001 / BCRC 20586 / JCM 3761 / NBRC 0622 / NRRL Y-65 / CBS 138) (Yeast).